We begin with the raw amino-acid sequence, 192 residues long: MSENIIPVRAVPAHDHEHDGERACMSRRRFLLFGGTSVALLSIASLPGVAQVMQALKADYARQRIGSLSALKTGEPLDFNYPYPDVRNILVKLGVAAGGGIGADKDIVAFNQQCTHMGGPLDGTYKAEHQILGPCPLHLTTFDLTRHGMVASGHATESLPQIVLEVQGDDIYAIGVLGLVYGFDSMNDVQPA.

The tat-type signal signal peptide spans 1–52 (MSENIIPVRAVPAHDHEHDGERACMSRRRFLLFGGTSVALLSIASLPGVAQV). One can recognise a Rieske domain in the interval 102–173 (GADKDIVAFN…LEVQGDDIYA (72 aa)). Residues cysteine 114, histidine 116, cysteine 135, and histidine 138 each coordinate [2Fe-2S] cluster.

It belongs to the AOX family. In terms of assembly, the iodate reductase (Idr) complex is composed of a molybdopterin-dependent iodate reductase (IdrA and IdrB subunits) and two associated peroxidases (IdrP1 and IdrP2). It depends on [2Fe-2S] cluster as a cofactor. Post-translationally, predicted to be exported by the Tat system. The position of the signal peptide cleavage has not been experimentally proven.

It is found in the periplasm. In terms of biological role, involved in iodate respiration. Probably catalyzes the reduction of iodate (IO(3)(-)) to hypoiodous acid (HIO) and H(2)O(2), using a reduced cytochrome c as the electron donor. The sequence is that of Iodate reductase subunit IdrB from Pseudomonas sp. (strain SCT).